Reading from the N-terminus, the 139-residue chain is Probable transcription termination protein NusA (139 aa).

The 43-residue stretch at 97-139 (STVAYAEVDRADTGVAIGRDGETIETARRLAERQFDIDDIELA) folds into the KH domain.

Belongs to the NusA family.

The protein resides in the cytoplasm. In terms of biological role, participates in transcription termination. The chain is Probable transcription termination protein NusA from Halococcus morrhuae (Micrococcus morrhuae).